The sequence spans 61 residues: Small ribosomal subunit protein uS14 (61 aa).

Residues Cys24, Cys27, Cys40, and Cys43 each coordinate Zn(2+).

This sequence belongs to the universal ribosomal protein uS14 family. Zinc-binding uS14 subfamily. As to quaternary structure, part of the 30S ribosomal subunit. Contacts proteins S3 and S10. Requires Zn(2+) as cofactor.

Functionally, binds 16S rRNA, required for the assembly of 30S particles and may also be responsible for determining the conformation of the 16S rRNA at the A site. This is Small ribosomal subunit protein uS14 from Parafrankia sp. (strain EAN1pec).